Consider the following 470-residue polypeptide: MYNIFFHRASKFPGPTIAGATSFRYHWAMSTGNVAPWLREQHARYGEVVRIAPDMISYVSPDAWKDIYAYKPGEKEQNGIDWTIPSRDDDVPSMFSEPNDAEHNRVRRLFLPAFSDRALKQQEPLLSKYSDQLVHLIRRGIDDNRDQEFDAVKLYNFTTFDIMGDLTFGEPLGLLKNSSYSEWVQNLFRDIKTAGIFLFIFDFPPLPWLVKKFSPPSIQRAHEIHKQHTVDRVNRRLEKGLDRPDIWNLVLSQPEGRGLTHPQMHANADIFMIAGTETTATLLSGLTYLLLKNPEKLQRLVEEIRGSFGSIEELTVENLARLPYLSACLSEGLRCYPPVPIGPSRVTPKTGGQVLGERVPGRVRLTIPQCAAYYSDLNFKDPYSFIPERWLPGTGYESDRKGILQPFLIGPRNCIGQNLAYHEMRLILCKLLWHYDIELCPDKGNWLLDQKMYIFWEKRPLMVKFTKARK.

Cys-414 serves as a coordination point for heme.

The protein belongs to the cytochrome P450 family. It depends on heme as a cofactor.

It participates in mycotoxin biosynthesis. Cytochrome P450 monooxygenase; part of the gene cluster that mediates the biosynthesis of fumonisins B1 (FB1), B2 (FB2), B3 (FB3), and B4 (FB4), which are carcinogenic mycotoxins. Within the pathway, FUM2 performs the C-10 hydroxylation present in FB2 and FB4 and which occurs early in the biosynthesis. The biosynthesis starts with the FUM1-catalyzed carbon chain assembly from one molecule of acetyl-CoA, eight molecules of malonyl-CoA, and two molecules of methionine (in S-adenosyl form). The C18 polyketide chain is released from the enzyme by a nucleophilic attack of a carbanion, which is derived from R-carbon of alanine by decarboxylation, on the carbonyl carbon of polyketide acyl chain. This step is catalyzed by the pyridoxal 5'-phosphate-dependent aminoacyl transferase FUM8. The resultant 3-keto intermediate is then stereospecifically reduced to a 3-hydroxyl product by reductase FUM13. Subsequent oxidations at C-10 by the cytochrome P450 monooxygenase FUM2, C-14 and C-15 by FUM6, FUM12 or FUM15, tricarballylic esterification of the hydroxyl groups on C-14 and C-15 by acyltransferase FUM14, and C-5 hydroxylation by 2-keto-glutarate-dependent dioxygenase FUM3 furnish the biosynthesis of fumonisins. The tricarballylic moieties are most likely derived from the citric acid cycle, and their addition to the carbon backbone may involve FUM7, FUM10, FUM11 and FUM14. This chain is Cytochrome P450 monooxygenase FUM2, found in Gibberella moniliformis (strain M3125 / FGSC 7600) (Maize ear and stalk rot fungus).